Here is a 150-residue protein sequence, read N- to C-terminus: Cyanate hydratase (150 aa).

Active-site residues include Arg91, Glu94, and Ser117.

The protein belongs to the cyanase family.

It carries out the reaction cyanate + hydrogencarbonate + 3 H(+) = NH4(+) + 2 CO2. Catalyzes the reaction of cyanate with bicarbonate to produce ammonia and carbon dioxide. This is Cyanate hydratase from Synechococcus sp. (strain CC9311).